A 282-amino-acid polypeptide reads, in one-letter code: 4-hydroxy-3-methylbut-2-enyl diphosphate reductase (282 aa).

Cys-12 provides a ligand contact to [4Fe-4S] cluster. Residues His-40 and His-72 each coordinate (2E)-4-hydroxy-3-methylbut-2-enyl diphosphate. His-40 and His-72 together coordinate dimethylallyl diphosphate. Residues His-40 and His-72 each contribute to the isopentenyl diphosphate site. Cys-94 contributes to the [4Fe-4S] cluster binding site. Residue His-122 coordinates (2E)-4-hydroxy-3-methylbut-2-enyl diphosphate. His-122 is a dimethylallyl diphosphate binding site. His-122 is an isopentenyl diphosphate binding site. Glu-124 (proton donor) is an active-site residue. Thr-160 lines the (2E)-4-hydroxy-3-methylbut-2-enyl diphosphate pocket. Cys-188 is a [4Fe-4S] cluster binding site. Positions 216, 218, and 260 each coordinate (2E)-4-hydroxy-3-methylbut-2-enyl diphosphate. 3 residues coordinate dimethylallyl diphosphate: Ser-216, Asn-218, and Ser-260. Isopentenyl diphosphate is bound by residues Ser-216, Asn-218, and Ser-260.

Belongs to the IspH family. [4Fe-4S] cluster serves as cofactor.

It catalyses the reaction isopentenyl diphosphate + 2 oxidized [2Fe-2S]-[ferredoxin] + H2O = (2E)-4-hydroxy-3-methylbut-2-enyl diphosphate + 2 reduced [2Fe-2S]-[ferredoxin] + 2 H(+). It carries out the reaction dimethylallyl diphosphate + 2 oxidized [2Fe-2S]-[ferredoxin] + H2O = (2E)-4-hydroxy-3-methylbut-2-enyl diphosphate + 2 reduced [2Fe-2S]-[ferredoxin] + 2 H(+). The protein operates within isoprenoid biosynthesis; dimethylallyl diphosphate biosynthesis; dimethylallyl diphosphate from (2E)-4-hydroxy-3-methylbutenyl diphosphate: step 1/1. It participates in isoprenoid biosynthesis; isopentenyl diphosphate biosynthesis via DXP pathway; isopentenyl diphosphate from 1-deoxy-D-xylulose 5-phosphate: step 6/6. Functionally, catalyzes the conversion of 1-hydroxy-2-methyl-2-(E)-butenyl 4-diphosphate (HMBPP) into a mixture of isopentenyl diphosphate (IPP) and dimethylallyl diphosphate (DMAPP). Acts in the terminal step of the DOXP/MEP pathway for isoprenoid precursor biosynthesis. The polypeptide is 4-hydroxy-3-methylbut-2-enyl diphosphate reductase (Geotalea daltonii (strain DSM 22248 / JCM 15807 / FRC-32) (Geobacter daltonii)).